Consider the following 138-residue polypeptide: ATP synthase epsilon chain (138 aa).

Belongs to the ATPase epsilon chain family. In terms of assembly, F-type ATPases have 2 components, CF(1) - the catalytic core - and CF(0) - the membrane proton channel. CF(1) has five subunits: alpha(3), beta(3), gamma(1), delta(1), epsilon(1). CF(0) has three main subunits: a, b and c.

The protein resides in the cell inner membrane. Its function is as follows. Produces ATP from ADP in the presence of a proton gradient across the membrane. The sequence is that of ATP synthase epsilon chain from Geobacter metallireducens (strain ATCC 53774 / DSM 7210 / GS-15).